A 545-amino-acid chain; its full sequence is Chaperonin GroEL (545 aa).

Residues 30-33, lysine 51, 87-91, glycine 415, and aspartate 495 each bind ATP; these read TLGP and DGTTT.

It belongs to the chaperonin (HSP60) family. As to quaternary structure, forms a cylinder of 14 subunits composed of two heptameric rings stacked back-to-back. Interacts with the co-chaperonin GroES.

The protein localises to the cytoplasm. The enzyme catalyses ATP + H2O + a folded polypeptide = ADP + phosphate + an unfolded polypeptide.. Functionally, together with its co-chaperonin GroES, plays an essential role in assisting protein folding. The GroEL-GroES system forms a nano-cage that allows encapsulation of the non-native substrate proteins and provides a physical environment optimized to promote and accelerate protein folding. The polypeptide is Chaperonin GroEL (Shewanella oneidensis (strain ATCC 700550 / JCM 31522 / CIP 106686 / LMG 19005 / NCIMB 14063 / MR-1)).